A 1724-amino-acid polypeptide reads, in one-letter code: Protein mono-ADP-ribosyltransferase PARP4 (1724 aa).

One can recognise a BRCT domain in the interval 1 to 94 (MVMGIFANCI…RLLDVKNYDP (94 aa)). Residues 19 to 25 (PQQQKKK) carry the Nuclear localization signal motif. Positions 97-123 (PLDITPPPDQKASSSEVKTEGLCPDSA) are disordered. Residues threonine 101 and threonine 333 each carry the phosphothreonine modification. The region spanning 242-370 (SEQLQALLLE…ETNLSKPNPP (129 aa)) is the PARP alpha-helical domain. One can recognise a PARP catalytic domain in the interval 369-573 (PPSLAKYRAL…FSMPGDQIKD (205 aa)). A VIT domain is found at 607–735 (SSTKAGLQDA…KVLIKITYIT (129 aa)). One can recognise a VWFA domain in the interval 876–1046 (EVIICLDCSS…KQIEDQMTRL (171 aa)). Serine 1236 is modified (phosphoserine). The Nuclear localization signal motif lies at 1237–1249 (KRKHRKIPFSKRK). The residue at position 1335 (serine 1335) is a Phosphoserine. The segment at 1408 to 1452 (SAQSAPLQHPGGFTTRPSAGTFPELDSPQLHFSLPTDPDPIRGFG) is disordered. Residue arginine 1476 is modified to Asymmetric dimethylarginine. Serine 1504 is subject to Phosphoserine. Residues 1562–1724 (VCIQHWQDAV…LHRVLHYSQG (163 aa)) are interaction with the major vault protein.

It belongs to the ARTD/PARP family. In terms of assembly, component of the vault ribonucleoprotein particle, at least composed of MVP, PARP4 and one or more vault RNAs (vRNAs). Interacts with TEP1. Widely expressed; the highest levels are in the kidney; also detected in heart, placenta, lung, liver, skeletal muscle, spleen, leukocytes and pancreas.

It localises to the cytoplasm. It is found in the nucleus. Its subcellular location is the cytoskeleton. The protein localises to the spindle. It carries out the reaction L-aspartyl-[protein] + NAD(+) = 4-O-(ADP-D-ribosyl)-L-aspartyl-[protein] + nicotinamide. The catalysed reaction is L-glutamyl-[protein] + NAD(+) = 5-O-(ADP-D-ribosyl)-L-glutamyl-[protein] + nicotinamide. Functionally, mono-ADP-ribosyltransferase that mediates mono-ADP-ribosylation of target proteins. The sequence is that of Protein mono-ADP-ribosyltransferase PARP4 from Homo sapiens (Human).